Consider the following 346-residue polypeptide: uncharacterized protein (346 aa).

The chain crosses the membrane as a helical span at residues 7-27 (AMVILLIICGTYVLFIQYGSV). Residues 29 to 48 (EKKSNDSEPQVSNEEAQSGK) are disordered. Residues 35–44 (SEPQVSNEEA) are compositionally biased toward polar residues. An SCP domain is found at 231–342 (LDLTNVIRVK…VDRKYYTQNF (112 aa)).

It is found in the cell membrane. This is an uncharacterized protein from Bacillus subtilis (strain 168).